The chain runs to 147 residues: Peptide methionine sulfoxide reductase MsrB (147 aa).

The MsrB domain occupies 8 to 131 (KEELKKILTE…NSASLKFIPK (124 aa)). The active-site Nucleophile is the C120.

This sequence belongs to the MsrB Met sulfoxide reductase family.

The enzyme catalyses L-methionyl-[protein] + [thioredoxin]-disulfide + H2O = L-methionyl-(R)-S-oxide-[protein] + [thioredoxin]-dithiol. This chain is Peptide methionine sulfoxide reductase MsrB, found in Clostridium perfringens (strain SM101 / Type A).